Here is a 150-residue protein sequence, read N- to C-terminus: Dihydroneopterin triphosphate diphosphatase (150 aa).

A Nudix hydrolase domain is found at 5–146 (VYKRPVSILV…SNRQAIEQFV (142 aa)). Substrate contacts are provided by Lys7, Arg29, and Thr40. The Nudix box signature appears at 41-62 (GSVEEGETAPQAAMREVKEEVT). 2 residues coordinate Mg(2+): Glu56 and Glu60. Residue 81 to 84 (FEIF) coordinates substrate. A Mg(2+)-binding site is contributed by Glu117. Ser135 contacts substrate.

Belongs to the Nudix hydrolase family. Mg(2+) is required as a cofactor.

The catalysed reaction is 7,8-dihydroneopterin 3'-triphosphate + H2O = 7,8-dihydroneopterin 3'-phosphate + diphosphate + H(+). Its function is as follows. Catalyzes the hydrolysis of dihydroneopterin triphosphate to dihydroneopterin monophosphate and pyrophosphate. Required for efficient folate biosynthesis. Can also hydrolyze nucleoside triphosphates with a preference for dATP. This is Dihydroneopterin triphosphate diphosphatase (nudB) from Escherichia coli O157:H7.